Here is a 312-residue protein sequence, read N- to C-terminus: Olfactory receptor 2L3 (312 aa).

Residues 1-24 (MENYNQTSTDFILLGFFPPSRIGL) lie on the Extracellular side of the membrane. N-linked (GlcNAc...) asparagine glycosylation occurs at Asn5. The helical transmembrane segment at 25–48 (FLFILIVFIFLMALIGNLSMILLI) threads the bilayer. Topologically, residues 49-56 (FLDTHLHT) are cytoplasmic. The chain crosses the membrane as a helical span at residues 57-78 (PMYFLLSQLSLIDLNYISTIVP). Residues 79-99 (KMASDFLSGNKSISFTGCGIQ) are Extracellular-facing. A glycan (N-linked (GlcNAc...) asparagine) is linked at Asn88. Cys96 and Cys188 are joined by a disulfide. A helical membrane pass occupies residues 100–119 (SFFFSALGGAEALLLASMAY). The Cytoplasmic portion of the chain corresponds to 120–138 (DRYIAICFPLHYPIRMSKR). Residues 139–157 (MCVLMITGSWIIGSINACA) traverse the membrane as a helical segment. At 158–194 (HTVYVLHIPYCQSRAINHFFCDVPAMVTLACMDTWVY) the chain is on the extracellular side. A helical membrane pass occupies residues 195–218 (EGTVFLSTTIFLVFPFIAISCSYG). Residues 219 to 235 (RVLLAVYHMKSAEGRKK) lie on the Cytoplasmic side of the membrane. A helical membrane pass occupies residues 236 to 258 (AYLTCSTHLTVVTFYYAPFVYTY). Topologically, residues 259 to 271 (LRPRSLRSPTEDK) are extracellular. The chain crosses the membrane as a helical span at residues 272–291 (VLAVFYTTLTPMLNPIIYSL). Residues 292–312 (RNKEVMGALTRVSQRICSGKM) lie on the Cytoplasmic side of the membrane.

It belongs to the G-protein coupled receptor 1 family.

Its subcellular location is the cell membrane. Functionally, odorant receptor. This chain is Olfactory receptor 2L3 (OR2L3), found in Homo sapiens (Human).